The sequence spans 1875 residues: MTTRFPHLTDGHPVEDTTLQSITLDVGYYPSLRSTSTEQKIHVLTIAWSILLFAYEENDSVRFGLEREDGWSCVAVDVHQEVRWQDLTVKGHGVLGEDSGVNTGVCLGGQIPMELQLVLCMDGSDSDSDSSLSMVYQPCLLSAGQAANVASTVEAILQALQGPNVPVGEIDMLGQRHVECIAGFNLAGRDLPAGCLHGIVEGQVRENGDRAAVDAWDGRLTYRELDVYATQLSGYLVSLGLAGSFVPLCADKSVWAVVAMLAILKAGAACSPLEPSHPRSRLESMVQTCGARAVLVTEGYASLFQMDGVEVVVVSPDVLALVQQTGTSLEISPTQGSAAFLMWTSGSTGAPKGVVLEHPALSSSITAYATASQFTPRTRTFQFTSFTFTVSLCDLFGTMSRGGCVCLPSEAQRLNDLAGALRDFRATFCWLTSTSLASLHPSQVPDLRSITVGGESLAEEIVARWASRCRLTVSYGTTETCGWCLLNPGLSPTSDARILGKPTIPAAWITHPDDPNRLVPIGAVGELLVEGPFLARGYLHDEERTAAQFIPPPAWMARFRPGETTRLYRTNDLVRYNSDGSIRFAGRRQAHAKIRGNRINLTEIESHVRRACGTADVVVDVVSTRDRVDVLTAFMLSPGPRQPLDGPLIQQADDGFRQIVESALHGLEDSLPSTMIPTAFVPLSRLPLTRTNKADRRLLREQAGQMSRAELAQLAAHNRAPAESPMTAAERVMQQLWSELMGLPLSSIGAKDSFFHLGGDSVLAIRLVPMAREHGLFLTVLDVFHHPRLGDLVAHIKDAGSPGPDTWTASPTAAEDVEHLKPEVARQCGVRPSDIEDVYPCTTLQEGLMALSAQRAGAYILTMAYEIPPAVDVARLQEAWQTVVRALPILRTRIVHLPSIGFHQAVVDEPIAWHFVSSEDEFRQSNRSNSMSLGSRLARFALLQPDSAPARLLLAVHHSIFDRWSAPLLLAEVEKAYAGQAVAQQHFRGFVAYVCSRPAEESDAFWRDRLADASPTVFPRLPDATYLPNPTSSRDTMVVLSSSRSDFTATSRLRLCWALLLSQHTGNTDVVFGAVSTGRSAPVAGIESLIGPTLATVPLRVQINGDASVADALQSLQEDATAMLPHEQRGLQNIVRIGPEAKAACAFQSLLIVHASNSGSKLDLMGMMEDEQLPELFSYGLTLSCEVQGPDRIHLQAFFDPRMIEEGYVEVLLSQLTHAMRQVNDVPDCKLDDLNLVSPLDEERLRTWNTAWSPAQVCVHEAIQKQSYAQPQAEAVCSWDGSLTYASLDERSSRLASQLHSRGVKQGAFVPLLLEKSKWTPVAMLAVMKAGGAFVLLDASFPVERLQSICNQLDAPIVVSSEKHRLLAGQLSRDLLLVSAMDSDAPLTSLPPVHPDDAVYAVFTSGSTGTPKGVIINHASYATGAHAHTTPASITPTARVLQFASYAFDASIIEHLTTLMAGGCVCIISDEERTSSLAEAVAARKATWTWLTPSVVRALEPRDFPSLTHLCLMGESMGRTEIERWSGHVHLMQAYGPAECSVLATLEPTLTGQSDPRNIGTPRGCNAWIVDRDDHTRLAPVGTIGELLIEGPIVGRGYHGDVVQTQAAFCEAPEWIRQFRPGQATPARVYKTGDLVQYSSRMDGSLLYIARKDTQVKIRGQRLELSEVEYHARTAMASSSDIVVDVVSPGGRQMLALFYTDDVMHDSPCMALPMTPDQRRFLSQVRPALEARLPSFMVPTLWIPVTRIPLSPSRKTDRRRLQSLVGDLTPDEYKPYIIASTSNSTQSLSKGEMKQHLSEHEILLQRLIWQVLEGDECSSPRPRPPISMDELFVNIGGDSLGALSLTSLAKQSGFTFMAGDVLGCTLGELARMRQE.

The tract at residues 202 to 590 is adenylation 1; sequence GQVRENGDRA…SIRFAGRRQA (389 aa). The region spanning 724–800 is the Carrier domain; the sequence is SPMTAAERVM…DLVAHIKDAG (77 aa). An O-(pantetheine 4'-phosphoryl)serine modification is found at S761. The segment at 836–1245 is condensation; the sequence is EDVYPCTTLQ…LVSPLDEERL (410 aa). The adenylation 2 stretch occupies residues 1264–1659; the sequence is QKQSYAQPQA…ARKDTQVKIR (396 aa).

This sequence belongs to the NRP synthetase family.

It catalyses the reaction 7-carboxymellein + L-phenylalanine + ATP = ochratoxin B + ADP + phosphate + H(+). The protein operates within mycotoxin biosynthesis. Nonribosomal peptide synthetase; part of the gene cluster that mediates the biosynthesis of ochratoxin A (OTA), a mycotoxin composed of a chlorinated type I polyketide dihydroisocoumarin moiety linked to L-phenylalanine, and demonstrated to have nephrotoxic, immunotoxic, genotoxic, neurotoxic, and teratogenic properties. OtaB is responsible for the linking of phenylalanine to the dihydroisocoumarin ring. The pathway begins with the highly reducing polyketide synthase otaA that catalyzes the formation of the isocoumarin group during the initial stages of biosynthesis, starting from one acetate and 4 malonate units, to originate the characteristic pentaketide skeleton 7-methylmellein (7-MM) of the OTA molecule. The newly identified cyclase otaY might be involved in the polyketide cyclization reaction during the initial steps of the OTA biosynthesis. 7-MM is then oxidized into 7-carboxymellein (also called ochratoxin beta) by the cytochrome P450 monooxygenase otaC. The NRPS encoded by the otaB gene is involved in the linking of phenylalanine to the dihydroisocoumarin ring. The reaction catalyzed by NRPS results in the production of ochratoxin B (OTB), which is the non-chlorinated analog of OTA and which subsequently serves as the substrate of the halogenase otaD for chlorination activity to form the final molecular structure of OTA, containing a chlorine atom in the C-5 position of the molecule. The chain is Nonribosomal peptide synthetase otaB from Aspergillus carbonarius (strain ITEM 5010).